Consider the following 600-residue polypeptide: Leiomodin-1 (600 aa).

Position 12 is a phosphoserine (S12). 3 disordered regions span residues 38-61 (VVDPDGSVPVGLRQRNQTEKQSTG), 80-324 (MQRE…PLER), and 472-573 (DKQR…QEKN). Composition is skewed to basic and acidic residues over residues 80–127 (MQRE…EPKR), 134–240 (FSRD…EKMK), 247–256 (DMKKEDEKVK), 263–292 (DTKKDDEKVKKNEPLHEKEAKDDSKTKTPE), and 472–497 (DKQRQKRLQEQRQAQEAKGEKKDLLE). Phosphoserine is present on residues S85 and S135. 8 repeat units span residues 165–180 (AAVDKKEAGKDGRGEE), 181–196 (RAVATKKEEEKKGSDR), 197–212 (NTGLSRDKDKKREEMK), 213–228 (EVAKKEDDEKVKGERR), 229–244 (NTDTRKEGEKMKRAGG), 245–260 (NTDMKKEDEKVKRGTG), 261–276 (NTDTKKDDEKVKKNEP), and 277–293 (LHEKEAKDDSKTKTPEK). The interval 165 to 293 (AAVDKKEAGK…DDSKTKTPEK (129 aa)) is 8 X approximate tandem repeats. A 5 X 4 AA approximate tandem repeats region spans residues 508-527 (SPKPSPQPSPKPSPKNSPKK). Pro residues-rich tracts occupy residues 510–522 (KPSPQPSPKPSPK) and 532–543 (AAPPPPPPPLAP). S555 carries the phosphoserine modification. One can recognise a WH2 domain in the interval 574-593 (SRDQLLAAIRSSNLKQLKKV).

The protein belongs to the tropomodulin family. In terms of tissue distribution, detected in lung vascular smooth muscle (at protein level). Detected in thyroid and extraocular smooth muscle, but not skeletal muscle. Detected in heart, aorta, skeletal muscle, colon, urinary bladder, uterus, stomach, and small intestine.

Its subcellular location is the cytoplasm. It localises to the myofibril. The protein resides in the sarcomere. It is found in the cytoskeleton. In terms of biological role, required for proper contractility of visceral smooth muscle cells. Mediates nucleation of actin filaments. This chain is Leiomodin-1 (LMOD1), found in Homo sapiens (Human).